Reading from the N-terminus, the 180-residue chain is ATP synthase subunit delta 2 (180 aa).

This sequence belongs to the ATPase delta chain family. In terms of assembly, F-type ATPases have 2 components, F(1) - the catalytic core - and F(0) - the membrane proton channel. F(1) has five subunits: alpha(3), beta(3), gamma(1), delta(1), epsilon(1). F(0) has three main subunits: a(1), b(2) and c(10-14). The alpha and beta chains form an alternating ring which encloses part of the gamma chain. F(1) is attached to F(0) by a central stalk formed by the gamma and epsilon chains, while a peripheral stalk is formed by the delta and b chains.

The protein localises to the cell inner membrane. In terms of biological role, f(1)F(0) ATP synthase produces ATP from ADP in the presence of a proton or sodium gradient. F-type ATPases consist of two structural domains, F(1) containing the extramembraneous catalytic core and F(0) containing the membrane proton channel, linked together by a central stalk and a peripheral stalk. During catalysis, ATP synthesis in the catalytic domain of F(1) is coupled via a rotary mechanism of the central stalk subunits to proton translocation. Its function is as follows. This protein is part of the stalk that links CF(0) to CF(1). It either transmits conformational changes from CF(0) to CF(1) or is implicated in proton conduction. The sequence is that of ATP synthase subunit delta 2 from Vibrio campbellii (strain ATCC BAA-1116).